We begin with the raw amino-acid sequence, 132 residues long: Ribosome-binding factor A (132 aa).

Belongs to the RbfA family. Monomer. Binds 30S ribosomal subunits, but not 50S ribosomal subunits or 70S ribosomes.

It localises to the cytoplasm. Functionally, one of several proteins that assist in the late maturation steps of the functional core of the 30S ribosomal subunit. Associates with free 30S ribosomal subunits (but not with 30S subunits that are part of 70S ribosomes or polysomes). Required for efficient processing of 16S rRNA. May interact with the 5'-terminal helix region of 16S rRNA. The polypeptide is Ribosome-binding factor A (Pseudomonas putida (strain GB-1)).